The following is a 367-amino-acid chain: MSLSRVSVTAVRNLHPVTFSPSPRINILHGANGSGKTSVLEAIHLLGLARSFRSARLLPVIQYEQLACTVFGQVELAEGGHSSLGISRDRGGEFQIRIDGQNARSAAQLAEILPLQLINPDSFRLLEGAPKIRRQFLDWGVFHVEPRFMATWQRLQKALRQRNSWLRHGTLDAASQAAWDRELCLASDEIDEYRRAYIKALKPVFEQTLSELLDLEGLTLSYYRGWDKERELSAVLATSLQRDQQIGHTQAGPQRADLRLRLGAHNAADILSRGQQKLVVCALRIAQGHLVSQARRGQCIYLVDDLPSELDEQHRRALCRLLEELRCQVFITCVDHELLREGWQTETPVALFHVEQGRITQTHDHRE.

Residue 30–37 (GANGSGKT) participates in ATP binding.

Belongs to the RecF family.

The protein localises to the cytoplasm. In terms of biological role, the RecF protein is involved in DNA metabolism; it is required for DNA replication and normal SOS inducibility. RecF binds preferentially to single-stranded, linear DNA. It also seems to bind ATP. This Pseudomonas fluorescens (strain SBW25) protein is DNA replication and repair protein RecF.